A 1262-amino-acid chain; its full sequence is Tau-tubulin kinase homolog Asator (1262 aa).

The interval 13–35 is disordered; that stretch reads NASAPDDGNQSCQPSSKQDQYLS. Residues 20–35 are compositionally biased toward polar residues; that stretch reads GNQSCQPSSKQDQYLS. Positions 173–436 constitute a Protein kinase domain; the sequence is WKVVRKIGGG…MLIGLFERCM (264 aa). ATP-binding positions include 179-187 and Lys202; that span reads IGGGGFGEI. Asp293 functions as the Proton acceptor in the catalytic mechanism. 3 disordered regions span residues 662–724, 755–792, and 984–1003; these read TVTN…TSNA, RSAT…ARSS, and KDSA…SRHR. Basic and acidic residues predominate over residues 667–679; that stretch reads KTSEVNRSTEEQK. Over residues 755–776 the composition is skewed to polar residues; the sequence is RSATSTNLRPSSSASQRINSGS.

The protein belongs to the protein kinase superfamily. CK1 Ser/Thr protein kinase family. In terms of assembly, interacts with Mgtor. Requires Mg(2+) as cofactor. As to expression, detected in larval brain.

Its subcellular location is the cytoplasm. The protein localises to the cytoskeleton. The protein resides in the spindle. The catalysed reaction is L-seryl-[protein] + ATP = O-phospho-L-seryl-[protein] + ADP + H(+). The enzyme catalyses L-threonyl-[protein] + ATP = O-phospho-L-threonyl-[protein] + ADP + H(+). Its function is as follows. Probable serine/threonine protein kinase. This is Tau-tubulin kinase homolog Asator from Drosophila melanogaster (Fruit fly).